The primary structure comprises 163 residues: Single-stranded DNA-binding protein 2 (163 aa).

The region spanning 1–104 is the SSB domain; the sequence is MINNVVLVGR…VVADNFQMLE (104 aa). Residues 109 to 163 are disordered; sequence REGGSTGSFNGGFNNNTSSSNSYSAPAQQTPNFGRDDSPFGNSNPMDISDDDLPF. The segment covering 119–130 has biased composition (low complexity); the sequence is GGFNNNTSSSNS. The span at 131-140 shows a compositional bias: polar residues; the sequence is YSAPAQQTPN. The Important for interaction with partner proteins motif lies at 158–163; the sequence is DDDLPF.

Homotetramer.

In terms of biological role, plays an important role in DNA replication, recombination and repair. Binds to ssDNA and to an array of partner proteins to recruit them to their sites of action during DNA metabolism. This chain is Single-stranded DNA-binding protein 2 (ssb2), found in Streptococcus pyogenes serotype M18 (strain MGAS8232).